The chain runs to 276 residues: Tryptophan synthase alpha chain (276 aa).

Residues Glu-49 and Asp-60 each act as proton acceptor in the active site.

It belongs to the TrpA family. Tetramer of two alpha and two beta chains.

It carries out the reaction (1S,2R)-1-C-(indol-3-yl)glycerol 3-phosphate + L-serine = D-glyceraldehyde 3-phosphate + L-tryptophan + H2O. Its pathway is amino-acid biosynthesis; L-tryptophan biosynthesis; L-tryptophan from chorismate: step 5/5. Its function is as follows. The alpha subunit is responsible for the aldol cleavage of indoleglycerol phosphate to indole and glyceraldehyde 3-phosphate. The chain is Tryptophan synthase alpha chain from Corynebacterium aurimucosum (strain ATCC 700975 / DSM 44827 / CIP 107346 / CN-1) (Corynebacterium nigricans).